A 367-amino-acid chain; its full sequence is Cytochrome b (367 aa).

The next 4 membrane-spanning stretches (helical) occupy residues 20 to 40 (MGSILGMILGLQLLTGILLSM), 64 to 85 (WFLRLLHANGASLFFLFMYAHI), 101 to 121 (WMVGVTIFLVSMATAFLGYVL), and 166 to 186 (FFSLHFLLPFLISGLALLHII). Residues histidine 70 and histidine 84 each contribute to the heme b site. Residues histidine 170 and histidine 184 each contribute to the heme b site. Histidine 189 provides a ligand contact to a ubiquinone. The next 4 membrane-spanning stretches (helical) occupy residues 214 to 234 (IKDSVGFLMVFGVLLMITFFS), 276 to 296 (LGGVVALLMSILILYFLPLSS), 308 to 328 (IYQVLFWILVVTFIILTWLGA), and 335 to 355 (YLSLAGPLTLLYFLMFLLLGM).

It belongs to the cytochrome b family. The main subunits of complex b-c1 are: cytochrome b, cytochrome c1 and the Rieske protein. Heme b serves as cofactor.

It is found in the mitochondrion inner membrane. Its function is as follows. Component of the ubiquinol-cytochrome c reductase complex (complex III or cytochrome b-c1 complex) that is part of the mitochondrial respiratory chain. The b-c1 complex mediates electron transfer from ubiquinol to cytochrome c. Contributes to the generation of a proton gradient across the mitochondrial membrane that is then used for ATP synthesis. The protein is Cytochrome b (MT-CYB) of Albinaria caerulea (Land snail).